Here is a 270-residue protein sequence, read N- to C-terminus: 4-hydroxy-4-methyl-2-oxoglutarate aldolase tasA (270 aa).

His49 acts as the Proton acceptor in catalysis. A divalent metal cation is bound by residues Glu156 and Asp182. Substrate is bound at residue Asp182.

The protein belongs to the HpcH/HpaI aldolase family. Homohexamer; trimer of dimers. Co(2+) serves as cofactor. It depends on Mn(2+) as a cofactor. The cofactor is Zn(2+). Fe(2+) is required as a cofactor. Requires Mg(2+) as cofactor.

It carries out the reaction 4-hydroxy-4-methyl-2-oxoglutarate = 2 pyruvate. Its pathway is secondary metabolite biosynthesis. In terms of biological role, 4-hydroxy-4-methyl-2-oxoglutarate aldolase; part of the gene cluster that mediates the biosynthesis of the tetramic acids Sch210971 and Sch210972, potential anti-HIV fungal natural product that contain a decalin core. The PKS module of tasS together with the enoylreductase tasC catalyze the formation of the polyketide unit which is then conjugated to 4-hydroxyl-4-methyl glutamate (HMG) by the condensation domain of the tasS NRPS module. One unique structural feature of Sch210971 and Sch210972 is the tetramic acid motif proposed to be derived from the non-proteinogenic amino acid HMG, by a Dieckmann-type condensation catalyzed by the reductase domain of tasS. The aldolase tasA catalyzes the aldol condensation of 2 molecules of pyruvic acid to yield the intermediate 4-hydroxyl-4-methyl-2-oxoglutarate (HMOG), which can then be stereoselectively transaminated, may be by tasG, to form HMG. The Diels-Alderase tas3 then uses the Dieckmann product of tasS as substrate and catalyzes the Diels-Alder cycloaddition to form the decalin ring of Sch210971 and Sch210972. The polypeptide is 4-hydroxy-4-methyl-2-oxoglutarate aldolase tasA (Hapsidospora irregularis).